The primary structure comprises 640 residues: Envelope glycoprotein (640 aa).

The signal sequence occupies residues 1 to 32 (MEGPAFSKPLKDKINPWGPLIILGILIRAGVS). At 33 to 582 (VQHDSPHQVF…FNKSPWFTTL (550 aa)) the chain is on the extracellular side. Residues Asn-43 and Asn-58 are each glycosylated (N-linked (GlcNAc...) asparagine; by host). 2 cysteine pairs are disulfide-bonded: Cys-109-Cys-126 and Cys-118-Cys-131. N-linked (GlcNAc...) asparagine; by host glycosylation is present at Asn-297. 6 disulfides stabilise this stretch: Cys-307/Cys-310, Cys-307/Cys-535, Cys-337/Cys-391, Cys-356/Cys-368, Cys-398/Cys-411, and Cys-527/Cys-534. Residues 307–310 (CWLC) carry the CXXC motif. Residues Asn-329 and Asn-336 are each glycosylated (N-linked (GlcNAc...) asparagine; by host). Asn-369 carries an N-linked (GlcNAc...) asparagine; by host glycan. Residues 444-464 (VSLTLALLLGGLTMGGIAAGV) are fusion peptide. Residues 473–509 (ATQQFQQLQAAMHDDLKEVEKSITNLEKSLTSLSEVV) adopt a coiled-coil conformation. Positions 510–526 (LQNRRGLDLLFLKEGGL) are immunosuppression. The short motif at 527 to 535 (CAALKEECC) is the CX6CC element. Residues 583 to 603 (ISTIMGPLIILLLILLFGPWI) form a helical membrane-spanning segment. The Cytoplasmic segment spans residues 604 to 640 (LNRLVQFIKDRISVVQALVLTQQYHQLKTIGDCKSRE). Positions 627–630 (YHQL) match the YXXL motif; contains endocytosis signal motif.

In terms of assembly, the mature envelope protein (Env) consists of a trimer of SU-TM heterodimers attached by a labile interchain disulfide bond. In terms of processing, specific enzymatic cleavages in vivo yield mature proteins. Envelope glycoproteins are synthesized as an inactive precursor that is N-glycosylated and processed likely by host cell furin or by a furin-like protease in the Golgi to yield the mature SU and TM proteins. The cleavage site between SU and TM requires the minimal sequence [KR]-X-[KR]-R. The R-peptide is released from the C-terminus of the cytoplasmic tail of the TM protein upon particle formation as a result of proteolytic cleavage by the viral protease. Cleavage of this peptide is required for TM to become fusogenic. Post-translationally, the CXXC motif is highly conserved across a broad range of retroviral envelope proteins. It is thought to participate in the formation of a labile disulfide bond possibly with the CX6CC motif present in the transmembrane protein. Isomerization of the intersubunit disulfide bond to an SU intrachain disulfide bond is thought to occur upon receptor recognition in order to allow membrane fusion. The R-peptide is palmitoylated.

It localises to the virion membrane. Its subcellular location is the host cell membrane. Functionally, the surface protein (SU) attaches the virus to the host cell by binding to its receptor. This interaction triggers the refolding of the transmembrane protein (TM) and is thought to activate its fusogenic potential by unmasking its fusion peptide. Fusion occurs at the host cell plasma membrane. In terms of biological role, the transmembrane protein (TM) acts as a class I viral fusion protein. Under the current model, the protein has at least 3 conformational states: pre-fusion native state, pre-hairpin intermediate state, and post-fusion hairpin state. During viral and target cell membrane fusion, the coiled coil regions (heptad repeats) assume a trimer-of-hairpins structure, positioning the fusion peptide in close proximity to the C-terminal region of the ectodomain. The formation of this structure appears to drive apposition and subsequent fusion of viral and target cell membranes. Membranes fusion leads to delivery of the nucleocapsid into the cytoplasm. In Mus musculus (Mouse), this protein is Envelope glycoprotein (env).